We begin with the raw amino-acid sequence, 189 residues long: MGLLDAGITKHNVLITSVDNVLNWARLSSLWPMGFGLACCAIEMMATNASNYDLERFGIFPRSSPRQSDLMLVAGTVSMKMAERVVRLYEQMPEPRYVLSMGSCSNCGGPYWEHGYHVLKGVDRIIPVDVYVPGCPPRPESLIGGLMKVQELIRMEQIGISRADALKKLAEKSVDPRVVIEEERKALRA.

[4Fe-4S] cluster-binding residues include Cys39, Cys40, Cys104, and Cys135.

The protein belongs to the complex I 20 kDa subunit family. NDH-1 is composed of 14 different subunits. Subunits NuoB, C, D, E, F, and G constitute the peripheral sector of the complex. Requires [4Fe-4S] cluster as cofactor.

The protein localises to the cell inner membrane. The catalysed reaction is a quinone + NADH + 5 H(+)(in) = a quinol + NAD(+) + 4 H(+)(out). Functionally, NDH-1 shuttles electrons from NADH, via FMN and iron-sulfur (Fe-S) centers, to quinones in the respiratory chain. The immediate electron acceptor for the enzyme in this species is believed to be a menaquinone. Couples the redox reaction to proton translocation (for every two electrons transferred, four hydrogen ions are translocated across the cytoplasmic membrane), and thus conserves the redox energy in a proton gradient. The protein is NADH-quinone oxidoreductase subunit B of Chlorobium phaeobacteroides (strain DSM 266 / SMG 266 / 2430).